The following is a 49-amino-acid chain: Small ribosomal subunit protein eS31 (49 aa).

Positions 21, 24, 39, and 42 each coordinate Zn(2+). The C4-type zinc finger occupies 21 to 42 (CPRCGNGVFLAEHEDRMSCGRC).

It belongs to the eukaryotic ribosomal protein eS31 family. As to quaternary structure, part of the 30S ribosomal subunit. Zn(2+) is required as a cofactor.

The protein is Small ribosomal subunit protein eS31 of Methanothrix thermoacetophila (strain DSM 6194 / JCM 14653 / NBRC 101360 / PT) (Methanosaeta thermophila).